Reading from the N-terminus, the 277-residue chain is MKFTKMHGLGNDYIYVDAISQKIENPNEISRFVSDRHFGIGSDGLVLILPSDLADFKMRMFNSDGSEAEMCGNAIRCVGKFVYDKKMTDKSTITIETLAGIKVLEMTIENDKVVLVKVDMGEPILKAETIPVLSEKHPVIDEEITAKDYCYNFTCVSIGNPHAITYIENVEEFPLEKIGPLFEIHEKFPRKTNVEFVELIDDSTVKMRVWERGAGETLACGTGACAVLVASVLKGYVGRKATVKLLGGDLTIEWNESDNHIYMTGPATTVFEGEIDI.

Residues Asn-11 and Asn-62 each coordinate substrate. Residue Cys-71 is the Proton donor of the active site. Substrate is bound by residues 72 to 73, Asn-160, Asn-193, and 211 to 212; these read GN and ER. The active-site Proton acceptor is the Cys-220. 221–222 is a substrate binding site; that stretch reads GT.

Belongs to the diaminopimelate epimerase family. Homodimer.

The protein resides in the cytoplasm. It carries out the reaction (2S,6S)-2,6-diaminopimelate = meso-2,6-diaminopimelate. It participates in amino-acid biosynthesis; L-lysine biosynthesis via DAP pathway; DL-2,6-diaminopimelate from LL-2,6-diaminopimelate: step 1/1. Its function is as follows. Catalyzes the stereoinversion of LL-2,6-diaminopimelate (L,L-DAP) to meso-diaminopimelate (meso-DAP), a precursor of L-lysine. The chain is Diaminopimelate epimerase from Methanococcus maripaludis (strain C6 / ATCC BAA-1332).